A 493-amino-acid polypeptide reads, in one-letter code: Solute carrier family 2, facilitated glucose transporter member 3 (493 aa).

Over 1 to 10 the chain is Cytoplasmic; that stretch reads MGTTKVTPSL. A helical membrane pass occupies residues 11 to 32; it reads VFAVTVATIGSFQFGYNTGVIN. The Extracellular segment spans residues 33 to 64; it reads APETILKDFLNYTLEERLEDLPSEGLLTALWS. Asn43 is a glycosylation site (N-linked (GlcNAc...) asparagine). Residues 65-85 form a helical membrane-spanning segment; sequence LCVAIFSVGGMIGSFSVGLFV. The Cytoplasmic segment spans residues 86 to 90; that stretch reads NRFGR. A helical transmembrane segment spans residues 91 to 111; the sequence is RNSMLLVNLLAIIAGCLMGFA. Over 112-118 the chain is Extracellular; it reads KIAESVE. Residues 119–142 traverse the membrane as a helical segment; the sequence is MLILGRLLIGIFCGLCTGFVPMYI. At 143–153 the chain is on the cytoplasmic side; that stretch reads GEVSPTALRGA. Residues 154–174 traverse the membrane as a helical segment; it reads FGTLNQLGIVVGILVAQIFGL. Gln159 serves as a coordination point for D-glucose. Over 175 to 183 the chain is Extracellular; the sequence is DFILGSEEL. A helical membrane pass occupies residues 184–204; the sequence is WPGLLGLTIIPAILQSAALPF. Over 205 to 269 the chain is Cytoplasmic; it reads CPESPRFLLI…LFRSPNYVQP (65 aa). Thr232 is subject to Phosphothreonine. A helical transmembrane segment spans residues 270–290; sequence LLISIVLQLSQQLSGINAVFY. The segment at 277–279 is important for selectivity against fructose; that stretch reads QLS. Residues 280-281 and Asn286 each bind D-glucose; that span reads QQ. The Extracellular segment spans residues 291-304; it reads YSTGIFKDAGVQEP. A helical transmembrane segment spans residues 305–325; it reads IYATIGAGVVNTIFTVVSLFL. D-glucose is bound at residue Asn315. Residues 326 to 331 are Cytoplasmic-facing; sequence VERAGR. Residues 332–352 form a helical membrane-spanning segment; the sequence is RTLHMIGLGGMAVCSVFMTIS. The Extracellular segment spans residues 353–363; sequence LLLKDDYEAMS. A helical transmembrane segment spans residues 364–389; it reads FVCIVAILIYVAFFEIGPGPIPWFIV. Residues Glu378 and Trp386 each contribute to the D-glucose site. Residues 390–399 lie on the Cytoplasmic side of the membrane; that stretch reads AELFSQGPRP. The chain crosses the membrane as a helical span at residues 400–420; the sequence is AAIAVAGCCNWTSNFLVGMLF. The Extracellular segment spans residues 421 to 429; that stretch reads PSAAAYLGA. Residues 430 to 450 traverse the membrane as a helical segment; it reads YVFIIFAAFLIFFLIFTFFKV. The Cytoplasmic portion of the chain corresponds to 451-493; sequence PETKGRTFEDIARAFEGQAHSGKGPAGVELNSMQPVKETPGNA. Residues 469–493 are disordered; that stretch reads AHSGKGPAGVELNSMQPVKETPGNA. Phosphoserine occurs at positions 471 and 482. Phosphothreonine is present on Thr489.

It belongs to the major facilitator superfamily. Sugar transporter (TC 2.A.1.1) family. Glucose transporter subfamily. In terms of assembly, interacts with SMIM43; the interaction may promote SLC2A3-mediated glucose transport to meet the energy needs of mesendoderm differentiation. As to expression, expressed in spermatozoa (at protein level). Detected in brain (at protein level). Abundantly expressed in the hippocampus, cerebellum and cerebral cortex with lower expression in the dentate gyrus and piriform cortex.

The protein resides in the cell membrane. It localises to the perikaryon. It is found in the cell projection. It carries out the reaction D-glucose(out) = D-glucose(in). The catalysed reaction is D-galactose(in) = D-galactose(out). Its activity is regulated as follows. Deoxyglucose transport is inhibited by D-glucose, D-galactose and maltose. Galactose transport is inhibited by D-glucose and maltose. Facilitative glucose transporter. Can also mediate the uptake of various other monosaccharides across the cell membrane. Mediates the uptake of glucose, 2-deoxyglucose, galactose, mannose, xylose and fucose, and probably also dehydroascorbate. Does not mediate fructose transport. Required for mesendoderm differentiation. This is Solute carrier family 2, facilitated glucose transporter member 3 from Mus musculus (Mouse).